Consider the following 365-residue polypeptide: Aminomethyltransferase (365 aa).

Belongs to the GcvT family. As to quaternary structure, the glycine cleavage system is composed of four proteins: P, T, L and H.

The enzyme catalyses N(6)-[(R)-S(8)-aminomethyldihydrolipoyl]-L-lysyl-[protein] + (6S)-5,6,7,8-tetrahydrofolate = N(6)-[(R)-dihydrolipoyl]-L-lysyl-[protein] + (6R)-5,10-methylene-5,6,7,8-tetrahydrofolate + NH4(+). In terms of biological role, the glycine cleavage system catalyzes the degradation of glycine. This is Aminomethyltransferase from Pelodictyon phaeoclathratiforme (strain DSM 5477 / BU-1).